The primary structure comprises 220 residues: Thiopurine S-methyltransferase (220 aa).

Residues Trp-10, Leu-45, Glu-66, and Arg-123 each coordinate S-adenosyl-L-methionine.

This sequence belongs to the class I-like SAM-binding methyltransferase superfamily. TPMT family.

The protein resides in the cytoplasm. It catalyses the reaction S-adenosyl-L-methionine + a thiopurine = S-adenosyl-L-homocysteine + a thiopurine S-methylether.. In Pseudomonas syringae pv. tomato (strain ATCC BAA-871 / DC3000), this protein is Thiopurine S-methyltransferase.